Consider the following 393-residue polypeptide: Probable acetyl-CoA acyltransferase (393 aa).

Catalysis depends on cysteine 88, which acts as the Acyl-thioester intermediate. Residues histidine 349 and cysteine 378 each act as proton acceptor in the active site.

This sequence belongs to the thiolase-like superfamily. Thiolase family.

It is found in the cytoplasm. It catalyses the reaction 2 acetyl-CoA = acetoacetyl-CoA + CoA. The protein is Probable acetyl-CoA acyltransferase of Staphylococcus aureus (strain COL).